Reading from the N-terminus, the 510-residue chain is NAD(P)H-quinone oxidoreductase subunit 2 B, chloroplastic (510 aa).

The next 13 membrane-spanning stretches (helical) occupy residues 24–44 (LLFFDGSLIFPECILIFGLIL), 57–77 (IPWLYFISSTSLVMSITALLF), 99–119 (IFQFLILLCSTLCIPLSVEYI), 124–144 (MAITEFLLFVLTATIGGMFLC), 149–169 (LITIFVAPECFSLCSYLLSGY), 183–203 (YLLMGGASSSILVHGFSWLYG), 227–247 (PGISIALIFITVGIGFKLSPA), 295–315 (WHLLLEILAILSMILGNLIAI), 323–343 (MLAYSSIGQIGYVIIGIIVGD), 354–374 (YMLFYISMNLGTFACIVLFGL), 395–415 (ALSLALCLLSLGGLPPLAGFF), 418–438 (LYLFWCGWQAGLYFLVLIGLL), and 484–504 (MIVCVIASTIPGISMNPIIAI).

Belongs to the complex I subunit 2 family. In terms of assembly, NDH is composed of at least 16 different subunits, 5 of which are encoded in the nucleus.

It localises to the plastid. It is found in the chloroplast thylakoid membrane. It carries out the reaction a plastoquinone + NADH + (n+1) H(+)(in) = a plastoquinol + NAD(+) + n H(+)(out). The catalysed reaction is a plastoquinone + NADPH + (n+1) H(+)(in) = a plastoquinol + NADP(+) + n H(+)(out). In terms of biological role, NDH shuttles electrons from NAD(P)H:plastoquinone, via FMN and iron-sulfur (Fe-S) centers, to quinones in the photosynthetic chain and possibly in a chloroplast respiratory chain. The immediate electron acceptor for the enzyme in this species is believed to be plastoquinone. Couples the redox reaction to proton translocation, and thus conserves the redox energy in a proton gradient. The chain is NAD(P)H-quinone oxidoreductase subunit 2 B, chloroplastic from Guizotia abyssinica (Niger).